The primary structure comprises 259 residues: DNA-directed RNA polymerase 30 kDa polypeptide (259 aa).

The segment at 155–195 adopts a TFIIS-type zinc-finger fold; that stretch reads YNTPCPNCKSRNTTPMMIQTRAADEPPLVRHACRDCKQHFK. Zn(2+) contacts are provided by Cys159, Cys162, Cys187, and Cys190. The disordered stretch occupies residues 220-259; sequence EILPDNNPSPPESPEPASPIDDGLIRATFDRNDEPPEDDE. The span at 226 to 236 shows a compositional bias: pro residues; that stretch reads NPSPPESPEPA.

Belongs to the poxviridae DNA-directed RNA polymerase 30 kDa subunit family. As to quaternary structure, the DNA-dependent RNA polymerase (vRNAP) consists of eight subunits encoded by early viral genes and termed according to their apparent molecular masses Rpo147, Rpo132, Rpo35, Rpo30, Rpo22, Rpo19, Rpo18, and Rpo7. The same holoenzyme, with the addition of the transcription-specificity factor RAP94, is used for early gene expression.

Its subcellular location is the virion. The protein resides in the host cytoplasm. The enzyme catalyses RNA(n) + a ribonucleoside 5'-triphosphate = RNA(n+1) + diphosphate. Its function is as follows. Part of the DNA-dependent RNA polymerase which catalyzes the transcription of viral DNA into RNA using the four ribonucleoside triphosphates as substrates. Responsible for the transcription of early, intermediate and late genes. DNA-dependent RNA polymerase associates with the early transcription factor (ETF), itself composed of OPG118 and OPG134, thereby allowing the early genes transcription. Late transcription, and probably also intermediate transcription, require newly synthesized RNA polymerase. This is DNA-directed RNA polymerase 30 kDa polypeptide (OPG066) from Bos taurus (Bovine).